We begin with the raw amino-acid sequence, 534 residues long: Ankyrin repeat domain-containing protein 34C (534 aa).

4 ANK repeats span residues 10–39 (TDGNSLLKAVWLGRLRLTRLLLEGGAYINE), 43–80 (KGETALMVACITKHVDQQSISKSKMVKYLLDNRADPNI), 84–114 (SGKTALIHACIRRAGGEVVSLLLENGADPSL), and 118–147 (TGASALVYAINADDKDALKHLLDACKAKGK). The interval 159–205 (SGTKTTKQYLNVPPSPKVEDRQSPPLCTTPSDVELKTSGLASPPSEK) is disordered. The residue at position 301 (S301) is a Phosphoserine. Disordered stretches follow at residues 332-368 (YEKGQAPHPRLARRGTLPLDQEKSGMCPPGPSTLKDP) and 384-403 (QPVGDPPNSMSLESGKGPLD). S446 carries the post-translational modification Phosphoserine. Residues 480–503 (SKPASPLASGLKSMAPVAPNSPKR) are disordered.

It belongs to the ANKRD34 family.

This is Ankyrin repeat domain-containing protein 34C (Ankrd34c) from Mus musculus (Mouse).